The sequence spans 868 residues: Leucine--tRNA ligase (868 aa).

A 'HIGH' region motif is present at residues 42-52; sequence PYPSGKLHMGH. A 'KMSKS' region motif is present at residues 627-631; it reads KMAKS. ATP is bound at residue K630.

Belongs to the class-I aminoacyl-tRNA synthetase family.

The protein resides in the cytoplasm. The catalysed reaction is tRNA(Leu) + L-leucine + ATP = L-leucyl-tRNA(Leu) + AMP + diphosphate. The chain is Leucine--tRNA ligase from Pseudomonas fluorescens (strain Pf0-1).